Reading from the N-terminus, the 125-residue chain is Small ribosomal subunit protein uS13 (125 aa).

The segment at 93–125 (RKGLPVRGQRTKTNARTRKGPKRTVAGKKKAGR) is disordered.

Belongs to the universal ribosomal protein uS13 family. Part of the 30S ribosomal subunit. Forms a loose heterodimer with protein S19. Forms two bridges to the 50S subunit in the 70S ribosome.

Its function is as follows. Located at the top of the head of the 30S subunit, it contacts several helices of the 16S rRNA. In the 70S ribosome it contacts the 23S rRNA (bridge B1a) and protein L5 of the 50S subunit (bridge B1b), connecting the 2 subunits; these bridges are implicated in subunit movement. Contacts the tRNAs in the A and P-sites. The protein is Small ribosomal subunit protein uS13 of Arthrobacter sp. (strain FB24).